The primary structure comprises 367 residues: Pectate trisaccharide-lyase (367 aa).

Positions 1–27 (MLMRFSRVVSLVLLLVFTAVLTGAVKA) are cleaved as a signal peptide. Ca(2+) contacts are provided by D144, D166, and D170. A PbH1 1 repeat occupies 151-173 (SHHIWIDHCTFVNGNDGAVDIKK). R224 is a catalytic residue. The stretch at 263 to 289 (GAKVHVEGNYFMGYGAVMAEAGIAFLP) is one PbH1 2 repeat.

Belongs to the polysaccharide lyase 1 family. In terms of assembly, homotetramer. It depends on Ca(2+) as a cofactor.

The protein localises to the secreted. It catalyses the reaction eliminative cleavage of unsaturated trigalacturonate as the major product from the reducing end of polygalacturonic acid/pectate.. Its activity is regulated as follows. Completely inactivated by EGTA. Its function is as follows. Cleaves unsaturated trigalacturonate from pectin. Activity is highest towards polygalacturonic acid, activity on methylated pectins decreases with an increasing degree of methylation. The chain is Pectate trisaccharide-lyase from Thermotoga maritima (strain ATCC 43589 / DSM 3109 / JCM 10099 / NBRC 100826 / MSB8).